Here is a 458-residue protein sequence, read N- to C-terminus: tRNA modification GTPase MnmE (458 aa).

R22, E84, and R123 together coordinate (6S)-5-formyl-5,6,7,8-tetrahydrofolate. The region spanning 220-379 (GIATAIIGRP…LEKAIADLFF (160 aa)) is the TrmE-type G domain. Residue N230 participates in K(+) binding. Residues 230–235 (NVGKSS), 249–255 (TDIAGTT), and 274–277 (DTAG) each bind GTP. S234 lines the Mg(2+) pocket. Residues T249, I251, and T254 each contribute to the K(+) site. T255 lines the Mg(2+) pocket. (6S)-5-formyl-5,6,7,8-tetrahydrofolate is bound at residue K458.

This sequence belongs to the TRAFAC class TrmE-Era-EngA-EngB-Septin-like GTPase superfamily. TrmE GTPase family. In terms of assembly, homodimer. Heterotetramer of two MnmE and two MnmG subunits. The cofactor is K(+).

Its subcellular location is the cytoplasm. Its function is as follows. Exhibits a very high intrinsic GTPase hydrolysis rate. Involved in the addition of a carboxymethylaminomethyl (cmnm) group at the wobble position (U34) of certain tRNAs, forming tRNA-cmnm(5)s(2)U34. The sequence is that of tRNA modification GTPase MnmE from Bacillus cytotoxicus (strain DSM 22905 / CIP 110041 / 391-98 / NVH 391-98).